Consider the following 598-residue polypeptide: Elongation factor 4 (598 aa).

Positions 3–185 constitute a tr-type G domain; it reads QHIRNFSIIA…MIVARIPPPE (183 aa). GTP-binding positions include 15–20 and 132–135; these read DHGKST and NKID.

This sequence belongs to the TRAFAC class translation factor GTPase superfamily. Classic translation factor GTPase family. LepA subfamily.

Its subcellular location is the cell inner membrane. It catalyses the reaction GTP + H2O = GDP + phosphate + H(+). In terms of biological role, required for accurate and efficient protein synthesis under certain stress conditions. May act as a fidelity factor of the translation reaction, by catalyzing a one-codon backward translocation of tRNAs on improperly translocated ribosomes. Back-translocation proceeds from a post-translocation (POST) complex to a pre-translocation (PRE) complex, thus giving elongation factor G a second chance to translocate the tRNAs correctly. Binds to ribosomes in a GTP-dependent manner. In Nitrosomonas eutropha (strain DSM 101675 / C91 / Nm57), this protein is Elongation factor 4.